The chain runs to 241 residues: B-cell receptor-associated protein 29 (241 aa).

Residues 1–6 (MTLQWA) are Lumenal-facing. A helical transmembrane segment spans residues 7-27 (AVATFLYAEIGLILIFCLPFI). Residues 28–43 (PPQRWQKIFSFNVWGK) are Cytoplasmic-facing. The helical transmembrane segment at 44 to 64 (IATFWNKAFLTIIILLIVLFL) threads the bilayer. Topologically, residues 65 to 103 (DAVREVRKYSSVHTIEKSSTSRPDAYEHTQMKLFRSQRN) are lumenal. A helical transmembrane segment spans residues 104 to 124 (LYISGFSLFFWLVLRRLVTLI). The Cytoplasmic portion of the chain corresponds to 125–241 (TQLAKELSNK…RLERGNKKRL (117 aa)). Positions 166 to 233 (GKDEECVLEA…KEHSELQDRL (68 aa)) form a coiled coil. The segment at 198–223 (LSKAQNDVMEMKMQSERLSKEYDQLL) is disordered. A compositionally biased stretch (basic and acidic residues) spans 206-223 (MEMKMQSERLSKEYDQLL). Positions 238 to 241 (KKRL) match the Di-lysine motif motif.

It belongs to the BCAP29/BCAP31 family. Homodimer. Heterodimer with BCAP31. Binds CASP8 (isoform 9) as a complex containing BCAP31, BCAP29, BCL2 and/or BCL2L1. Interacts with VAMP3, VAMP1 and membrane IgD immunoglobulins. May interact with ACTG1 and non-muscle myosin II.

The protein resides in the endoplasmic reticulum membrane. Its function is as follows. May play a role in anterograde transport of membrane proteins from the endoplasmic reticulum to the Golgi. May be involved in CASP8-mediated apoptosis. In Homo sapiens (Human), this protein is B-cell receptor-associated protein 29 (BCAP29).